A 455-amino-acid chain; its full sequence is L-serine dehydratase (455 aa).

This sequence belongs to the iron-sulfur dependent L-serine dehydratase family. [4Fe-4S] cluster serves as cofactor.

The enzyme catalyses L-serine = pyruvate + NH4(+). It participates in carbohydrate biosynthesis; gluconeogenesis. The sequence is that of L-serine dehydratase (sdaA) from Streptomyces coelicolor (strain ATCC BAA-471 / A3(2) / M145).